Consider the following 99-residue polypeptide: Acylphosphatase-2 (99 aa).

Residue serine 2 is modified to N-acetylserine. The 91-residue stretch at 9-99 folds into the Acylphosphatase-like domain; it reads SVDYEVFGRV…LEYSNFSIRY (91 aa). Residues arginine 24 and asparagine 42 contribute to the active site. Serine 93 carries the post-translational modification Phosphoserine.

Belongs to the acylphosphatase family.

It carries out the reaction an acyl phosphate + H2O = a carboxylate + phosphate + H(+). Its physiological role is not yet clear. This chain is Acylphosphatase-2 (ACYP2), found in Homo sapiens (Human).